The chain runs to 87 residues: Small ribosomal subunit protein uS15 (87 aa).

It belongs to the universal ribosomal protein uS15 family. As to quaternary structure, part of the 30S ribosomal subunit. Forms a bridge to the 50S subunit in the 70S ribosome, contacting the 23S rRNA.

One of the primary rRNA binding proteins, it binds directly to 16S rRNA where it helps nucleate assembly of the platform of the 30S subunit by binding and bridging several RNA helices of the 16S rRNA. In terms of biological role, forms an intersubunit bridge (bridge B4) with the 23S rRNA of the 50S subunit in the ribosome. The sequence is that of Small ribosomal subunit protein uS15 from Alkaliphilus metalliredigens (strain QYMF).